The sequence spans 211 residues: Thymidylate kinase (211 aa).

11-18 (GPDGAGKT) is a binding site for ATP.

This sequence belongs to the thymidylate kinase family.

It carries out the reaction dTMP + ATP = dTDP + ADP. Functionally, phosphorylation of dTMP to form dTDP in both de novo and salvage pathways of dTTP synthesis. The protein is Thymidylate kinase of Streptococcus pyogenes serotype M3 (strain ATCC BAA-595 / MGAS315).